Here is a 423-residue protein sequence, read N- to C-terminus: Hypoxia responsive morphology factor B (423 aa).

The short motif at 46 to 69 is the Bipartite nuclear localization signal element; that stretch reads KRSKTRRPKKEYKLQYENTKAHRV. Positions 157-187 are RNA recognition motif (RRM)-like domain; that stretch reads TQNCWAYRAAYLNAVHTIFSEQICSAMEVSP. Over residues 243 to 257 the composition is skewed to polar residues; the sequence is LSPQSGRGPEPSTQI. Positions 243–273 are disordered; sequence LSPQSGRGPEPSTQIAEPGRHDSQSEQSTIS.

The protein belongs to the hrmA family.

The protein resides in the nucleus. Probably modulates the generation of the hypoxia-typic morphotype (called H-MORPH) with altered biofilm architecture that leads to increased host inflammation, rapid disease progression, and mortality in a murine model of invasive aspergillosis. This Aspergillus fumigatus (strain CBS 144.89 / FGSC A1163 / CEA10) (Neosartorya fumigata) protein is Hypoxia responsive morphology factor B.